The chain runs to 466 residues: MEYRVERDTMGEVKVPADRYWGAQTQRSLEHFRIGAWRFRMPLEIIRAYGMLKKAAARANLELGELPEEIARAIIQAAEEVIAGKLDDHFPLVVFQTGSGTQTNMNVNEVIANRASEILGKPLGSKYVHPNDHVNRGQSSNDTFPTAMYVATVLALHQHLYPAVEGLIATFEEKARAFDGIVKVGRTHLMDAVPITLGQEVGSWAAQLRNTLAMVKEAEKGLYNLAIGGTAVGTGLNAHPRFGELVARYLAEETGLPFRVAENRFAALAAHDELVHVMGALRTLAGALMKIGNDIRWLASGPYGGIGEIFIPANEPGSSIMPGKVNPTQVEALPWVVVRVFGNDQAVAFAGSQGNFQLNVYKPVMVDAALESIKLLGDAVASFDQHLAQGIEPNLERIEEHLNKNPMLATALNKAIGYDKAAEIVKKAIKEKKSLKQAALELGYLTEEEFDRIVVPMRLAKPHENA.

Substrate contacts are provided by residues 99–101 (SGT), 129–132 (HPND), 139–141 (SSN), and threonine 187. Histidine 188 (proton donor/acceptor) is an active-site residue. The active site involves serine 318. Substrate-binding positions include serine 319 and 324-326 (KVN).

It belongs to the class-II fumarase/aspartase family. Fumarase subfamily. As to quaternary structure, homotetramer.

Its subcellular location is the cytoplasm. The catalysed reaction is (S)-malate = fumarate + H2O. The protein operates within carbohydrate metabolism; tricarboxylic acid cycle; (S)-malate from fumarate: step 1/1. In terms of biological role, involved in the TCA cycle. Catalyzes the stereospecific interconversion of fumarate to L-malate. The sequence is that of Fumarate hydratase class II from Thermus aquaticus.